Reading from the N-terminus, the 1096-residue chain is cAMP/cGMP-dependent 3',5'-cAMP/cGMP phosphodiesterase B (1096 aa).

The segment at S216–Q248 is disordered. Residues S225–E236 are compositionally biased toward polar residues. The a divalent metal cation site is built by H573, H575, and D577. Residues V783 to H930 and I946 to I1070 contribute to the a nucleoside 3',5'-cyclic phosphate site.

It belongs to the metallo-beta-lactamase superfamily. cNMP phosphodiesterase family. Requires Mn(2+) as cofactor. Mg(2+) serves as cofactor. Zn(2+) is required as a cofactor.

The protein resides in the cytoplasm. The protein localises to the cytosol. The catalysed reaction is 3',5'-cyclic AMP + H2O = AMP + H(+). It catalyses the reaction 3',5'-cyclic GMP + H2O = GMP + H(+). Dual specificity cAMP and cGMP phosphodiesterase with marked preference for cyclic AMP, which is activated by cAMP and cGMP. Likely functions as a cAMP-stimulated cAMP-phosphodiesterase which may play a role in regulating the cAMP relay response. The chain is cAMP/cGMP-dependent 3',5'-cAMP/cGMP phosphodiesterase B (pdeE) from Dictyostelium discoideum (Social amoeba).